We begin with the raw amino-acid sequence, 413 residues long: Gamma-glutamyl phosphate reductase (413 aa).

Belongs to the gamma-glutamyl phosphate reductase family.

It localises to the cytoplasm. The enzyme catalyses L-glutamate 5-semialdehyde + phosphate + NADP(+) = L-glutamyl 5-phosphate + NADPH + H(+). The protein operates within amino-acid biosynthesis; L-proline biosynthesis; L-glutamate 5-semialdehyde from L-glutamate: step 2/2. In terms of biological role, catalyzes the NADPH-dependent reduction of L-glutamate 5-phosphate into L-glutamate 5-semialdehyde and phosphate. The product spontaneously undergoes cyclization to form 1-pyrroline-5-carboxylate. The chain is Gamma-glutamyl phosphate reductase from Caulobacter vibrioides (strain ATCC 19089 / CIP 103742 / CB 15) (Caulobacter crescentus).